Here is a 369-residue protein sequence, read N- to C-terminus: Chaperone protein DnaJ (369 aa).

The 67-residue stretch at D7–G73 folds into the J domain. The segment at G143–K225 adopts a CR-type zinc-finger fold. Positions 156, 159, 173, 176, 199, 202, 213, and 216 each coordinate Zn(2+). CXXCXGXG motif repeat units lie at residues C156–G163, C173–G180, C199–G206, and C213–G220.

The protein belongs to the DnaJ family. In terms of assembly, homodimer. The cofactor is Zn(2+).

The protein resides in the cytoplasm. In terms of biological role, participates actively in the response to hyperosmotic and heat shock by preventing the aggregation of stress-denatured proteins and by disaggregating proteins, also in an autonomous, DnaK-independent fashion. Unfolded proteins bind initially to DnaJ; upon interaction with the DnaJ-bound protein, DnaK hydrolyzes its bound ATP, resulting in the formation of a stable complex. GrpE releases ADP from DnaK; ATP binding to DnaK triggers the release of the substrate protein, thus completing the reaction cycle. Several rounds of ATP-dependent interactions between DnaJ, DnaK and GrpE are required for fully efficient folding. Also involved, together with DnaK and GrpE, in the DNA replication of plasmids through activation of initiation proteins. This chain is Chaperone protein DnaJ, found in Thermotoga petrophila (strain ATCC BAA-488 / DSM 13995 / JCM 10881 / RKU-1).